The sequence spans 267 residues: Ribosomal RNA large subunit methyltransferase E (267 aa).

S-adenosyl-L-methionine is bound by residues Gly-52, Phe-54, Asp-72, Asp-90, and Asp-114. The active-site Proton acceptor is the Lys-154. Residues 212–252 (EAPRAPAPPEQAAAPEEATAPATRAARQKPAPAKKPAAAKR) are compositionally biased toward low complexity. Positions 212-267 (EAPRAPAPPEQAAAPEEATAPATRAARQKPAPAKKPAAAKRPAARKRAAKKPARRA) are disordered. Residues 253–267 (PAARKRAAKKPARRA) are compositionally biased toward basic residues.

The protein belongs to the class I-like SAM-binding methyltransferase superfamily. RNA methyltransferase RlmE family.

Its subcellular location is the cytoplasm. It carries out the reaction uridine(2552) in 23S rRNA + S-adenosyl-L-methionine = 2'-O-methyluridine(2552) in 23S rRNA + S-adenosyl-L-homocysteine + H(+). In terms of biological role, specifically methylates the uridine in position 2552 of 23S rRNA at the 2'-O position of the ribose in the fully assembled 50S ribosomal subunit. This Anaeromyxobacter dehalogenans (strain 2CP-C) protein is Ribosomal RNA large subunit methyltransferase E.